The following is a 308-amino-acid chain: Aspartate carbamoyltransferase catalytic subunit (308 aa).

Residues arginine 59 and threonine 60 each contribute to the carbamoyl phosphate site. Lysine 87 lines the L-aspartate pocket. Carbamoyl phosphate contacts are provided by arginine 109, histidine 139, and glutamine 142. L-aspartate-binding residues include arginine 172 and arginine 224. Residues alanine 265 and proline 266 each contribute to the carbamoyl phosphate site.

The protein belongs to the aspartate/ornithine carbamoyltransferase superfamily. ATCase family. Heterododecamer (2C3:3R2) of six catalytic PyrB chains organized as two trimers (C3), and six regulatory PyrI chains organized as three dimers (R2).

The enzyme catalyses carbamoyl phosphate + L-aspartate = N-carbamoyl-L-aspartate + phosphate + H(+). Its pathway is pyrimidine metabolism; UMP biosynthesis via de novo pathway; (S)-dihydroorotate from bicarbonate: step 2/3. In terms of biological role, catalyzes the condensation of carbamoyl phosphate and aspartate to form carbamoyl aspartate and inorganic phosphate, the committed step in the de novo pyrimidine nucleotide biosynthesis pathway. This Enterococcus faecalis (strain ATCC 700802 / V583) protein is Aspartate carbamoyltransferase catalytic subunit.